The sequence spans 427 residues: Gamma-glutamyl phosphate reductase (427 aa).

This sequence belongs to the gamma-glutamyl phosphate reductase family.

It localises to the cytoplasm. It catalyses the reaction L-glutamate 5-semialdehyde + phosphate + NADP(+) = L-glutamyl 5-phosphate + NADPH + H(+). Its pathway is amino-acid biosynthesis; L-proline biosynthesis; L-glutamate 5-semialdehyde from L-glutamate: step 2/2. In terms of biological role, catalyzes the NADPH-dependent reduction of L-glutamate 5-phosphate into L-glutamate 5-semialdehyde and phosphate. The product spontaneously undergoes cyclization to form 1-pyrroline-5-carboxylate. In Rhizobium johnstonii (strain DSM 114642 / LMG 32736 / 3841) (Rhizobium leguminosarum bv. viciae), this protein is Gamma-glutamyl phosphate reductase.